The following is a 1414-amino-acid chain: Alpha-(1-&gt;3)-arabinofuranosyltransferase (1414 aa).

Helical transmembrane passes span 57 to 77 (YLFPHGTFFLLGDVLGVPGWV), 81 to 101 (LWWALLLTVGFWGVLRVAEAL), 128 to 148 (AISSETLPMMLAPWVLLPVIL), 167 to 187 (VALMGAVNAVATLTGCLAAVI), 203 to 223 (AWWLLCGALAVTWWVVALLML), 273 to 293 (STTAVLATTVVAAAGLAGLAL), 302 to 322 (LITMLLIGVVLLGLGYSGGLG), 352 to 372 (LPLALGLVHLLGRIPLPGSAP), and 389 to 409 (VAVAIVVLSALAAGTSLAWTA). The F5/8 type C domain maps to 687-845 (YPSDGADLVY…QYDASGFAHP (159 aa)). A run of 4 helical transmembrane segments spans residues 1253–1273 (VGLIGGLALLPLLALLALIPV), 1297–1317 (ALVAGTAISGVAGLLVVGAAM), 1333–1353 (VWDNVTVVVAAGGLILAGSVL), and 1364–1384 (YVGHTPGVQFLALLSVAFLAA). A disordered region spans residues 1393–1414 (PEPSEDGRSAKPEHTGASAHAG). Positions 1394–1406 (EPSEDGRSAKPEH) are enriched in basic and acidic residues.

The protein localises to the membrane. It carries out the reaction Adds an alpha-D-arabinofuranosyl group from trans,octacis-decaprenylphospho-beta-D-arabinofuranose at the 3-O-position of an alpha-(1-&gt;5)-arabinofuranan chain attached to a beta-(1-&gt;5)-galactofuranan chain.. It participates in cell wall biogenesis; cell wall polysaccharide biosynthesis. In terms of biological role, involved in the biosynthesis of the arabinogalactan (AG) region of the mycolylarabinogalactan-peptidoglycan (mAGP) complex, an essential component of the mycobacterial cell wall. Catalyzes the addition of an arabinofuranosyl (Araf) residue from the sugar donor decaprenyl-phospho-arabinose (DPA) on the C-3 of an alpha-(1-&gt;5)-linked Araf from the arabinan backbone of AG. This is Alpha-(1-&gt;3)-arabinofuranosyltransferase (aftD) from Mycolicibacterium smegmatis (strain ATCC 700084 / mc(2)155) (Mycobacterium smegmatis).